We begin with the raw amino-acid sequence, 88 residues long: MKTTLVVVVLACIVALTSALEADLLSHESCRYISSNRYCGHDYMDKLCNTTCNCKDVLSEFSCGVLKKDGQCNKADIQAKCKLTCDKC.

The signal sequence occupies residues 1 to 19 (MKTTLVVVVLACIVALTSA). One can recognise a ShKT domain in the interval 54–88 (CKDVLSEFSCGVLKKDGQCNKADIQAKCKLTCDKC). 3 disulfide bridges follow: C54-C88, C63-C81, and C72-C85.

This sequence belongs to the sea anemone type 1 potassium channel toxin family. As to expression, expressed both outside and in acontia, a specialised envenomation structure laden with batteries of venom-containing nematocysts found only in the superfamily Metridioidea.

It localises to the secreted. The protein localises to the nematocyst. Its function is as follows. Inhibits voltage-gated potassium channels (Kv1/KCNA). The protein is KTx type I of Calliactis polypus (Hermit crab anemone).